The primary structure comprises 608 residues: Nuclear protein localization protein 4 homolog (608 aa).

At Ala2 the chain carries N-acetylalanine. The residue at position 179 (Lys179) is an N6-acetyllysine. Positions 226 to 363 constitute an MPN domain; the sequence is IMFENHTVAD…MCRLSPDGHF (138 aa). The segment at 580–608 adopts a RanBP2-type zinc-finger fold; it reads TAAMWACQHCTFMNQPGTGHCEMCSLPRT.

It belongs to the NPL4 family. As to quaternary structure, heterodimer with UFD1. The heterodimer binds ubiquitinated proteins. The heterodimer binds to VCP and inhibits Golgi membrane fusion. Interacts with ZFAND2B; probably through VCP. In terms of tissue distribution, expressed at highest levels in brain, heart, skeletal muscle, kidney and fetal liver.

Its subcellular location is the cytoplasm. The protein resides in the cytosol. It is found in the endoplasmic reticulum. It localises to the nucleus. Its pathway is protein degradation; proteasomal ubiquitin-dependent pathway. The ternary complex containing UFD1, VCP and NPLOC4 binds ubiquitinated proteins and is necessary for the export of misfolded proteins from the ER to the cytoplasm, where they are degraded by the proteasome. The NPLOC4-UFD1-VCP complex regulates spindle disassembly at the end of mitosis and is necessary for the formation of a closed nuclear envelope. Acts as a negative regulator of type I interferon production via the complex formed with VCP and UFD1, which binds to RIGI and recruits RNF125 to promote ubiquitination and degradation of RIGI. This is Nuclear protein localization protein 4 homolog (NPLOC4) from Homo sapiens (Human).